Reading from the N-terminus, the 858-residue chain is Bifunctional uridylyltransferase/uridylyl-removing enzyme (858 aa).

A uridylyltransferase region spans residues 1-324 (MSAHAAPSPE…PATSGITRVL (324 aa)). A uridylyl-removing region spans residues 325-681 (SADRFVEKQG…ARPSPIGDAL (357 aa)). Positions 443-565 (VDQHILMVLR…VGNERYLTAL (123 aa)) constitute an HD domain. ACT domains lie at 682 to 763 (QVLV…PSKG) and 790 to 858 (ILSV…AIAV).

The protein belongs to the GlnD family. The cofactor is Mg(2+).

The catalysed reaction is [protein-PII]-L-tyrosine + UTP = [protein-PII]-uridylyl-L-tyrosine + diphosphate. The enzyme catalyses [protein-PII]-uridylyl-L-tyrosine + H2O = [protein-PII]-L-tyrosine + UMP + H(+). Uridylyltransferase (UTase) activity is inhibited by glutamine, while glutamine activates uridylyl-removing (UR) activity. Modifies, by uridylylation and deuridylylation, the PII regulatory proteins (GlnB and homologs), in response to the nitrogen status of the cell that GlnD senses through the glutamine level. Under low glutamine levels, catalyzes the conversion of the PII proteins and UTP to PII-UMP and PPi, while under higher glutamine levels, GlnD hydrolyzes PII-UMP to PII and UMP (deuridylylation). Thus, controls uridylylation state and activity of the PII proteins, and plays an important role in the regulation of nitrogen assimilation and metabolism. This chain is Bifunctional uridylyltransferase/uridylyl-removing enzyme, found in Burkholderia orbicola (strain AU 1054).